The chain runs to 385 residues: NADH-quinone oxidoreductase subunit H (385 aa).

A run of 8 helical transmembrane segments spans residues 14-34 (GLKLVVIFLMMVQAVPILVWL), 80-100 (FLYYAAPIFALIPGAVAFSAI), 130-150 (IGVGIVFILGVSSLAAYTLLM), 172-192 (ISYELALGLSIVGVIMLYGTF), 219-239 (LPNWGIFYQPVGALLFFSAAF), 280-300 (MMIASGLMVLFFFGGYTIPYV), 325-345 (LIHFLVFNIKFGFFMWVFIWV), and 365-385 (MLPWALANTIITAFVIYIASL).

The protein belongs to the complex I subunit 1 family. In terms of assembly, NDH-1 is composed of 14 different subunits. Subunits NuoA, H, J, K, L, M, N constitute the membrane sector of the complex.

It localises to the cell inner membrane. The catalysed reaction is a quinone + NADH + 5 H(+)(in) = a quinol + NAD(+) + 4 H(+)(out). Functionally, NDH-1 shuttles electrons from NADH, via FMN and iron-sulfur (Fe-S) centers, to quinones in the respiratory chain. The immediate electron acceptor for the enzyme in this species is believed to be ubiquinone. Couples the redox reaction to proton translocation (for every two electrons transferred, four hydrogen ions are translocated across the cytoplasmic membrane), and thus conserves the redox energy in a proton gradient. This subunit may bind ubiquinone. The chain is NADH-quinone oxidoreductase subunit H from Bdellovibrio bacteriovorus (strain ATCC 15356 / DSM 50701 / NCIMB 9529 / HD100).